Here is a 359-residue protein sequence, read N- to C-terminus: 5-amino-6-(D-ribitylamino)uracil--L-tyrosine 4-hydroxyphenyl transferase (359 aa).

Residues 45-282 (VTYVVNANIN…VYAISRIFFK (238 aa)) enclose the Radical SAM core domain. [4Fe-4S] cluster-binding residues include Cys-59, Cys-63, and Cys-66.

This sequence belongs to the radical SAM superfamily. CofH family. Consists of two subunits, CofG and CofH. It depends on [4Fe-4S] cluster as a cofactor.

The catalysed reaction is 5-amino-6-(D-ribitylamino)uracil + L-tyrosine + S-adenosyl-L-methionine = 5-amino-5-(4-hydroxybenzyl)-6-(D-ribitylimino)-5,6-dihydrouracil + 2-iminoacetate + 5'-deoxyadenosine + L-methionine + H(+). It participates in cofactor biosynthesis; coenzyme F0 biosynthesis. Functionally, catalyzes the radical-mediated synthesis of 5-amino-5-(4-hydroxybenzyl)-6-(D-ribitylimino)-5,6-dihydrouracil from 5-amino-6-(D-ribitylamino)uracil and L-tyrosine. The chain is 5-amino-6-(D-ribitylamino)uracil--L-tyrosine 4-hydroxyphenyl transferase from Methanococcus maripaludis (strain C7 / ATCC BAA-1331).